Consider the following 362-residue polypeptide: Alanine racemase (362 aa).

The active-site Proton acceptor; specific for D-alanine is the Lys-33. Residue Lys-33 is modified to N6-(pyridoxal phosphate)lysine. Arg-129 provides a ligand contact to substrate. The Proton acceptor; specific for L-alanine role is filled by Tyr-254. Met-302 is a substrate binding site.

Belongs to the alanine racemase family. The cofactor is pyridoxal 5'-phosphate.

It carries out the reaction L-alanine = D-alanine. It functions in the pathway amino-acid biosynthesis; D-alanine biosynthesis; D-alanine from L-alanine: step 1/1. Functionally, catalyzes the interconversion of L-alanine and D-alanine. May also act on other amino acids. The sequence is that of Alanine racemase (alr) from Xylella fastidiosa (strain 9a5c).